Reading from the N-terminus, the 378-residue chain is 7-methylxanthine methyltransferase 1 (378 aa).

Positions 18, 61, 66, 100, 101, 139, 140, and 156 each coordinate S-adenosyl-L-homocysteine. Theobromine is bound by residues Y157, H160, and W161. N178, D260, F262, and N263 together coordinate Mg(2+). Position 362 (Y362) interacts with theobromine.

Belongs to the methyltransferase superfamily. Type-7 methyltransferase family. Requires Mg(2+) as cofactor. Mainly expressed, at low levels, in leaves and fruits (grains). Also present, at lower levels, in roots, stamens and pistils.

It is found in the cytoplasm. It carries out the reaction 7-methylxanthine + S-adenosyl-L-methionine = theobromine + S-adenosyl-L-homocysteine + H(+). It functions in the pathway alkaloid biosynthesis. Involved in the biosynthesis of caffeine. Catalyzes the conversion of 7-methylxanthine (7mX) to theobromine and of paraxanthine to caffeine. The sequence is that of 7-methylxanthine methyltransferase 1 from Coffea canephora (Robusta coffee).